The sequence spans 172 residues: Translation initiation factor IF-3 (172 aa).

The protein belongs to the IF-3 family. In terms of assembly, monomer.

Its subcellular location is the cytoplasm. In terms of biological role, IF-3 binds to the 30S ribosomal subunit and shifts the equilibrium between 70S ribosomes and their 50S and 30S subunits in favor of the free subunits, thus enhancing the availability of 30S subunits on which protein synthesis initiation begins. The chain is Translation initiation factor IF-3 from Lactobacillus johnsonii (strain CNCM I-12250 / La1 / NCC 533).